A 31-amino-acid chain; its full sequence is Photosystem II reaction center protein T (31 aa).

Residues alanine 3 to phenylalanine 23 form a helical membrane-spanning segment.

This sequence belongs to the PsbT family. As to quaternary structure, PSII is composed of 1 copy each of membrane proteins PsbA, PsbB, PsbC, PsbD, PsbE, PsbF, PsbH, PsbI, PsbJ, PsbK, PsbL, PsbM, PsbT, PsbY, PsbZ, Psb30/Ycf12, at least 3 peripheral proteins of the oxygen-evolving complex and a large number of cofactors. It forms dimeric complexes.

The protein resides in the plastid. The protein localises to the chloroplast thylakoid membrane. In terms of biological role, found at the monomer-monomer interface of the photosystem II (PS II) dimer, plays a role in assembly and dimerization of PSII. PSII is a light-driven water plastoquinone oxidoreductase, using light energy to abstract electrons from H(2)O, generating a proton gradient subsequently used for ATP formation. This is Photosystem II reaction center protein T from Bigelowiella natans (Pedinomonas minutissima).